A 457-amino-acid polypeptide reads, in one-letter code: Siroheme synthase (457 aa).

The interval L4–A202 is precorrin-2 dehydrogenase /sirohydrochlorin ferrochelatase. Residues D22 to V23 and L43 to T44 each bind NAD(+). A Phosphoserine modification is found at S128. The tract at residues G216–R448 is uroporphyrinogen-III C-methyltransferase. Residue P225 participates in S-adenosyl-L-methionine binding. The active-site Proton acceptor is the D248. The Proton donor role is filled by K270. S-adenosyl-L-methionine contacts are provided by residues G301–D303, I306, T331–A332, M382, G411, and A437.

In the N-terminal section; belongs to the precorrin-2 dehydrogenase / sirohydrochlorin ferrochelatase family. The protein in the C-terminal section; belongs to the precorrin methyltransferase family. As to quaternary structure, homodimer.

The catalysed reaction is uroporphyrinogen III + 2 S-adenosyl-L-methionine = precorrin-2 + 2 S-adenosyl-L-homocysteine + H(+). The enzyme catalyses precorrin-2 + NAD(+) = sirohydrochlorin + NADH + 2 H(+). It carries out the reaction siroheme + 2 H(+) = sirohydrochlorin + Fe(2+). The protein operates within cofactor biosynthesis; adenosylcobalamin biosynthesis; precorrin-2 from uroporphyrinogen III: step 1/1. Its pathway is cofactor biosynthesis; adenosylcobalamin biosynthesis; sirohydrochlorin from precorrin-2: step 1/1. It functions in the pathway porphyrin-containing compound metabolism; siroheme biosynthesis; precorrin-2 from uroporphyrinogen III: step 1/1. It participates in porphyrin-containing compound metabolism; siroheme biosynthesis; siroheme from sirohydrochlorin: step 1/1. The protein operates within porphyrin-containing compound metabolism; siroheme biosynthesis; sirohydrochlorin from precorrin-2: step 1/1. Functionally, multifunctional enzyme that catalyzes the SAM-dependent methylations of uroporphyrinogen III at position C-2 and C-7 to form precorrin-2 via precorrin-1. Then it catalyzes the NAD-dependent ring dehydrogenation of precorrin-2 to yield sirohydrochlorin. Finally, it catalyzes the ferrochelation of sirohydrochlorin to yield siroheme. The sequence is that of Siroheme synthase from Salmonella typhimurium (strain LT2 / SGSC1412 / ATCC 700720).